The sequence spans 702 residues: Polyribonucleotide nucleotidyltransferase (702 aa).

2 residues coordinate Mg(2+): Asp-485 and Asp-491. One can recognise a KH domain in the interval 552 to 612; the sequence is PRTEIICIDP…EGVKKAISII (61 aa). The region spanning 622-690 is the S1 motif domain; it reads GEIYLGKVTK…NQGRINLSRK (69 aa).

This sequence belongs to the polyribonucleotide nucleotidyltransferase family. Mg(2+) serves as cofactor.

The protein localises to the cytoplasm. It carries out the reaction RNA(n+1) + phosphate = RNA(n) + a ribonucleoside 5'-diphosphate. Functionally, involved in mRNA degradation. Catalyzes the phosphorolysis of single-stranded polyribonucleotides processively in the 3'- to 5'-direction. In Clostridium botulinum (strain Kyoto / Type A2), this protein is Polyribonucleotide nucleotidyltransferase.